We begin with the raw amino-acid sequence, 550 residues long: Gamma-aminobutyric acid receptor subunit beta (550 aa).

The first 24 residues, 1 to 24 (MRRSKTRRIFHVSITLLLVSTIFC), serve as a signal peptide directing secretion. Over 25-264 (QNGTKPHNNS…FQLRRSVGYF (240 aa)) the chain is Extracellular. N-linked (GlcNAc...) asparagine glycans are attached at residues Asn26, Asn32, Asn33, Asn45, Asn53, and Asn193. An intrachain disulfide couples Cys180 to Cys194. 3 helical membrane-spanning segments follow: residues 265–285 (IFQT…SFWI), 292–311 (ARVA…STGV), and 324–344 (IDIY…EYAA). Residues 345 to 527 (VNYSYWGRER…DVNLIDKYSR (183 aa)) lie on the Cytoplasmic side of the membrane. Residues 405–465 (AMSTSNTAAQ…TTSLKGARPH (61 aa)) are disordered. Residues 406-421 (MSTSNTAAQNNNFEST) are compositionally biased toward polar residues. Residues 528 to 548 (VVFPVCFIVFNLFYWSYYMMV) form a helical membrane-spanning segment.

It belongs to the ligand-gated ion channel (TC 1.A.9) family. Gamma-aminobutyric acid receptor (TC 1.A.9.5) subfamily.

It is found in the postsynaptic cell membrane. Its subcellular location is the cell membrane. Functionally, GABA, an inhibitory neurotransmitter, mediates neuronal inhibition by binding to the GABA receptor and opening an integral chloride channel. The protein is Gamma-aminobutyric acid receptor subunit beta (gab-1) of Caenorhabditis elegans.